The following is a 588-amino-acid chain: Sperm-associated microtubule inner protein 4 (588 aa).

T219 bears the Phosphothreonine mark. 3 positions are modified to phosphoserine: S406, S421, and S427. Y441 is subject to Phosphotyrosine. 3 positions are modified to phosphoserine: S457, S484, and S516.

In terms of tissue distribution, predominantly expressed in the testes.

The protein resides in the cytoplasm. Its subcellular location is the cytoskeleton. It localises to the microtubule organizing center. It is found in the centrosome. The protein localises to the flagellum axoneme. Microtubule inner protein (MIP) part of the dynein-decorated doublet microtubules (DMTs) in flagellum axoneme. May serve to reinforce and thus stabilize the microtubule structure in the sperm flagella. This chain is Sperm-associated microtubule inner protein 4 (Spmip4), found in Mus musculus (Mouse).